The following is a 111-amino-acid chain: MASAVLSASRVSGLLGRALPRVGRPMSSGAHGEEGSARIWKALTYFVALPGVGVSMLNVFLKSRHEEHERPEFVAYPHLRIRTKPFPWGDGNHTLFHNPHMNPLPTGYEDE.

Residues 1–26 (MASAVLSASRVSGLLGRALPRVGRPM) constitute a mitochondrion transit peptide. The Mitochondrial matrix segment spans residues 27 to 36 (SSGAHGEEGS). A helical membrane pass occupies residues 37-61 (ARIWKALTYFVALPGVGVSMLNVFL). Residues 62–111 (KSRHEEHERPEFVAYPHLRIRTKPFPWGDGNHTLFHNPHMNPLPTGYEDE) are Mitochondrial intermembrane-facing.

This sequence belongs to the cytochrome c oxidase subunit 6A family. In terms of assembly, component of the cytochrome c oxidase (complex IV, CIV), a multisubunit enzyme composed of 14 subunits. The complex is composed of a catalytic core of 3 subunits MT-CO1, MT-CO2 and MT-CO3, encoded in the mitochondrial DNA, and 11 supernumerary subunits COX4I, COX5A, COX5B, COX6A, COX6B, COX6C, COX7A, COX7B, COX7C, COX8 and NDUFA4, which are encoded in the nuclear genome. The complex exists as a monomer or a dimer and forms supercomplexes (SCs) in the inner mitochondrial membrane with NADH-ubiquinone oxidoreductase (complex I, CI) and ubiquinol-cytochrome c oxidoreductase (cytochrome b-c1 complex, complex III, CIII), resulting in different assemblies (supercomplex SCI(1)III(2)IV(1) and megacomplex MCI(2)III(2)IV(2)).

It is found in the mitochondrion inner membrane. Its pathway is energy metabolism; oxidative phosphorylation. Component of the cytochrome c oxidase, the last enzyme in the mitochondrial electron transport chain which drives oxidative phosphorylation. The respiratory chain contains 3 multisubunit complexes succinate dehydrogenase (complex II, CII), ubiquinol-cytochrome c oxidoreductase (cytochrome b-c1 complex, complex III, CIII) and cytochrome c oxidase (complex IV, CIV), that cooperate to transfer electrons derived from NADH and succinate to molecular oxygen, creating an electrochemical gradient over the inner membrane that drives transmembrane transport and the ATP synthase. Cytochrome c oxidase is the component of the respiratory chain that catalyzes the reduction of oxygen to water. Electrons originating from reduced cytochrome c in the intermembrane space (IMS) are transferred via the dinuclear copper A center (CU(A)) of subunit 2 and heme A of subunit 1 to the active site in subunit 1, a binuclear center (BNC) formed by heme A3 and copper B (CU(B)). The BNC reduces molecular oxygen to 2 water molecules unsing 4 electrons from cytochrome c in the IMS and 4 protons from the mitochondrial matrix. This is Cytochrome c oxidase subunit 6A1, mitochondrial (Cox6a1) from Rattus norvegicus (Rat).